A 119-amino-acid polypeptide reads, in one-letter code: uncharacterized protein (119 aa).

Positions 1–26 (MNKLKRLSMLTVMIASVFIFSSHALA) are cleaved as a signal peptide. The 75-residue stretch at 30–104 (YTVSTSSGAP…IVPGFVSDTY (75 aa)) folds into the SH3b domain.

To B.subtilis YraJ.

This is an uncharacterized protein from Bacillus subtilis (strain 168).